Reading from the N-terminus, the 511-residue chain is Cobyric acid synthase (511 aa).

The GATase cobBQ-type domain maps to 251–443; that stretch reads LLDIAIICLP…IHGIFDNDIF (193 aa). Cysteine 332 serves as the catalytic Nucleophile. Histidine 435 is an active-site residue.

It belongs to the CobB/CobQ family. CobQ subfamily.

The protein operates within cofactor biosynthesis; adenosylcobalamin biosynthesis. Functionally, catalyzes amidations at positions B, D, E, and G on adenosylcobyrinic A,C-diamide. NH(2) groups are provided by glutamine, and one molecule of ATP is hydrogenolyzed for each amidation. This is Cobyric acid synthase from Listeria innocua serovar 6a (strain ATCC BAA-680 / CLIP 11262).